The chain runs to 455 residues: tRNA modification GTPase MnmE (455 aa).

3 residues coordinate (6S)-5-formyl-5,6,7,8-tetrahydrofolate: R24, E81, and K120. Residues 216-378 (GMTVVIAGRP…LREHLKACMG (163 aa)) form the TrmE-type G domain. N226 provides a ligand contact to K(+). Residues 226–231 (NAGKSS), 245–251 (TDIAGTT), 270–273 (DTAG), 335–338 (NKAD), and 359–361 (SAR) contribute to the GTP site. A Mg(2+)-binding site is contributed by S230. Residues T245, I247, and T250 each contribute to the K(+) site. Residue T251 coordinates Mg(2+). A (6S)-5-formyl-5,6,7,8-tetrahydrofolate-binding site is contributed by K455.

It belongs to the TRAFAC class TrmE-Era-EngA-EngB-Septin-like GTPase superfamily. TrmE GTPase family. Homodimer. Heterotetramer of two MnmE and two MnmG subunits. It depends on K(+) as a cofactor.

The protein localises to the cytoplasm. Functionally, exhibits a very high intrinsic GTPase hydrolysis rate. Involved in the addition of a carboxymethylaminomethyl (cmnm) group at the wobble position (U34) of certain tRNAs, forming tRNA-cmnm(5)s(2)U34. This is tRNA modification GTPase MnmE from Pseudomonas aeruginosa (strain UCBPP-PA14).